Consider the following 71-residue polypeptide: Sec-independent protein translocase protein TatA (71 aa).

A helical membrane pass occupies residues 1-21 (MGSFSIWHWLIVLVVVLLLFG). The segment at 47–71 (AEEAKTVEHRTDEPVGEVKQKASKS) is disordered. Over residues 49-71 (EAKTVEHRTDEPVGEVKQKASKS) the composition is skewed to basic and acidic residues.

Belongs to the TatA/E family. In terms of assembly, the Tat system comprises two distinct complexes: a TatABC complex, containing multiple copies of TatA, TatB and TatC subunits, and a separate TatA complex, containing only TatA subunits. Substrates initially bind to the TatABC complex, which probably triggers association of the separate TatA complex to form the active translocon.

The protein resides in the cell inner membrane. Its function is as follows. Part of the twin-arginine translocation (Tat) system that transports large folded proteins containing a characteristic twin-arginine motif in their signal peptide across membranes. TatA could form the protein-conducting channel of the Tat system. The sequence is that of Sec-independent protein translocase protein TatA from Chelativorans sp. (strain BNC1).